Reading from the N-terminus, the 102-residue chain is uncharacterized protein (102 aa).

The chain crosses the membrane as a helical span at residues 36 to 55; the sequence is IISLLAIFIKMCLWLWKQFL.

Its subcellular location is the membrane. This is an uncharacterized protein from Homo sapiens (Human).